The chain runs to 265 residues: Orotidine 5'-phosphate decarboxylase (265 aa).

Substrate is bound by residues Asp-37, 59–61 (KTH), 91–100 (DRKFADIGNT), Tyr-217, and Arg-235. Catalysis depends on Lys-93, which acts as the Proton donor.

Belongs to the OMP decarboxylase family.

The enzyme catalyses orotidine 5'-phosphate + H(+) = UMP + CO2. It participates in pyrimidine metabolism; UMP biosynthesis via de novo pathway; UMP from orotate: step 2/2. This Candida glabrata (strain ATCC 2001 / BCRC 20586 / JCM 3761 / NBRC 0622 / NRRL Y-65 / CBS 138) (Yeast) protein is Orotidine 5'-phosphate decarboxylase (URA3).